The following is a 251-amino-acid chain: Tryptophan synthase alpha chain (251 aa).

Residues E36 and D47 each act as proton acceptor in the active site.

The protein belongs to the TrpA family. Tetramer of two alpha and two beta chains.

The enzyme catalyses (1S,2R)-1-C-(indol-3-yl)glycerol 3-phosphate + L-serine = D-glyceraldehyde 3-phosphate + L-tryptophan + H2O. It participates in amino-acid biosynthesis; L-tryptophan biosynthesis; L-tryptophan from chorismate: step 5/5. The alpha subunit is responsible for the aldol cleavage of indoleglycerol phosphate to indole and glyceraldehyde 3-phosphate. This Thermococcus kodakarensis (strain ATCC BAA-918 / JCM 12380 / KOD1) (Pyrococcus kodakaraensis (strain KOD1)) protein is Tryptophan synthase alpha chain.